The sequence spans 60 residues: Small, acid-soluble spore protein 1 (60 aa).

It belongs to the alpha/beta-type SASP family. In terms of processing, SASP are degraded in the first minutes of spore germination and provide amino acids for both new protein synthesis and metabolism.

Functionally, SASP are bound to spore DNA. They are double-stranded DNA-binding proteins that cause DNA to change to an a-like conformation. They protect the DNA backbone from chemical and enzymatic cleavage and are thus involved in dormant spore's high resistance to UV light. The chain is Small, acid-soluble spore protein 1 (ssp1) from Clostridium perfringens (strain 13 / Type A).